Reading from the N-terminus, the 666-residue chain is tRNA 5-methylaminomethyl-2-thiouridine biosynthesis bifunctional protein MnmC (666 aa).

The tRNA (mnm(5)s(2)U34)-methyltransferase stretch occupies residues 1–245 (MKQYAIQPAT…KREMLCGVME (245 aa)). Residues 270–666 (IGGGIASALL…RKLLKGKAVK (397 aa)) are FAD-dependent cmnm(5)s(2)U34 oxidoreductase.

This sequence in the N-terminal section; belongs to the methyltransferase superfamily. tRNA (mnm(5)s(2)U34)-methyltransferase family. The protein in the C-terminal section; belongs to the DAO family. FAD serves as cofactor.

The protein resides in the cytoplasm. The catalysed reaction is 5-aminomethyl-2-thiouridine(34) in tRNA + S-adenosyl-L-methionine = 5-methylaminomethyl-2-thiouridine(34) in tRNA + S-adenosyl-L-homocysteine + H(+). Functionally, catalyzes the last two steps in the biosynthesis of 5-methylaminomethyl-2-thiouridine (mnm(5)s(2)U) at the wobble position (U34) in tRNA. Catalyzes the FAD-dependent demodification of cmnm(5)s(2)U34 to nm(5)s(2)U34, followed by the transfer of a methyl group from S-adenosyl-L-methionine to nm(5)s(2)U34, to form mnm(5)s(2)U34. This chain is tRNA 5-methylaminomethyl-2-thiouridine biosynthesis bifunctional protein MnmC, found in Salmonella paratyphi A (strain ATCC 9150 / SARB42).